Here is a 170-residue protein sequence, read N- to C-terminus: Small ribosomal subunit protein uS13m (170 aa).

Residues 130 to 170 (LKKKPTNRKERRIFNKIKKLQDKHNKQQQKNKKSKKWKTKK) are disordered. Composition is skewed to basic residues over residues 132-147 (KKPT…NKIK) and 155-170 (KQQQ…KTKK).

This sequence belongs to the universal ribosomal protein uS13 family. As to quaternary structure, part of the small ribosomal subunit.

The protein localises to the mitochondrion. Located at the top of the head of the small subunit, it contacts several helices of the small subunit rRNA. In Dictyostelium citrinum (Slime mold), this protein is Small ribosomal subunit protein uS13m (mrps13).